A 69-amino-acid chain; its full sequence is UPF0337 protein YjbJ (69 aa).

This sequence belongs to the UPF0337 (CsbD) family.

The sequence is that of UPF0337 protein YjbJ (yjbJ) from Escherichia coli O6:H1 (strain CFT073 / ATCC 700928 / UPEC).